A 346-amino-acid polypeptide reads, in one-letter code: tRNA N6-adenosine threonylcarbamoyltransferase (346 aa).

Fe cation is bound by residues His-111 and His-115. Residues Leu-134–Gly-138, Asp-167, Gly-180, Asp-184, and Asn-279 contribute to the substrate site. Residue Asp-307 participates in Fe cation binding.

It belongs to the KAE1 / TsaD family. Fe(2+) serves as cofactor.

Its subcellular location is the cytoplasm. The catalysed reaction is L-threonylcarbamoyladenylate + adenosine(37) in tRNA = N(6)-L-threonylcarbamoyladenosine(37) in tRNA + AMP + H(+). Its function is as follows. Required for the formation of a threonylcarbamoyl group on adenosine at position 37 (t(6)A37) in tRNAs that read codons beginning with adenine. Is involved in the transfer of the threonylcarbamoyl moiety of threonylcarbamoyl-AMP (TC-AMP) to the N6 group of A37, together with TsaE and TsaB. TsaD likely plays a direct catalytic role in this reaction. This chain is tRNA N6-adenosine threonylcarbamoyltransferase, found in Gloeothece citriformis (strain PCC 7424) (Cyanothece sp. (strain PCC 7424)).